The chain runs to 470 residues: uncharacterized protein (470 aa).

Residues 1 to 69 (MTRYQHLATL…PRSGYFVAQR (69 aa)) enclose the HTH gntR-type domain. Lysine 313 is modified (N6-(pyridoxal phosphate)lysine).

The protein in the C-terminal section; belongs to the class-I pyridoxal-phosphate-dependent aminotransferase family.

This is an uncharacterized protein from Escherichia coli (strain K12).